Consider the following 462-residue polypeptide: Argininosuccinate lyase (462 aa).

Belongs to the lyase 1 family. Argininosuccinate lyase subfamily.

It is found in the cytoplasm. It carries out the reaction 2-(N(omega)-L-arginino)succinate = fumarate + L-arginine. The protein operates within amino-acid biosynthesis; L-arginine biosynthesis; L-arginine from L-ornithine and carbamoyl phosphate: step 3/3. This Bacillus mycoides (strain KBAB4) (Bacillus weihenstephanensis) protein is Argininosuccinate lyase.